The sequence spans 358 residues: Probable branched-chain-amino-acid aminotransferase (358 aa).

At lysine 196 the chain carries N6-(pyridoxal phosphate)lysine.

The protein belongs to the class-IV pyridoxal-phosphate-dependent aminotransferase family. Requires pyridoxal 5'-phosphate as cofactor.

The enzyme catalyses L-leucine + 2-oxoglutarate = 4-methyl-2-oxopentanoate + L-glutamate. It carries out the reaction L-isoleucine + 2-oxoglutarate = (S)-3-methyl-2-oxopentanoate + L-glutamate. The catalysed reaction is L-valine + 2-oxoglutarate = 3-methyl-2-oxobutanoate + L-glutamate. It participates in amino-acid biosynthesis; L-isoleucine biosynthesis; L-isoleucine from 2-oxobutanoate: step 4/4. It functions in the pathway amino-acid biosynthesis; L-leucine biosynthesis; L-leucine from 3-methyl-2-oxobutanoate: step 4/4. Its pathway is amino-acid biosynthesis; L-valine biosynthesis; L-valine from pyruvate: step 4/4. Its function is as follows. Acts on leucine, isoleucine and valine. The sequence is that of Probable branched-chain-amino-acid aminotransferase (ilvE) from Staphylococcus aureus (strain N315).